A 156-amino-acid polypeptide reads, in one-letter code: Ribosomal RNA large subunit methyltransferase H (156 aa).

Residues Leu-74, Gly-105, and 124-129 (LSKLTL) contribute to the S-adenosyl-L-methionine site.

The protein belongs to the RNA methyltransferase RlmH family. Homodimer.

It localises to the cytoplasm. The enzyme catalyses pseudouridine(1915) in 23S rRNA + S-adenosyl-L-methionine = N(3)-methylpseudouridine(1915) in 23S rRNA + S-adenosyl-L-homocysteine + H(+). In terms of biological role, specifically methylates the pseudouridine at position 1915 (m3Psi1915) in 23S rRNA. The sequence is that of Ribosomal RNA large subunit methyltransferase H from Legionella pneumophila (strain Lens).